The primary structure comprises 467 residues: MSDVLPIILSGGSGTRLWPLSRESYPKQFLPLVGEHSMLQATWLRSAPVAAHAPIVVANEEHRFMAAEQLQQLGVKPSAILLEPKGRNTAPAIAVAALEATRNGGDPLLLVLPSDHVIRDEAAFQAAVTVAAAAAEQGKLVTFGIKPTAPETGYGYIKAGVGTGATAVERFVEKPDLATAQGYLASGEYYWNSGMFLFRASRYLEELRKFQPAIADACQKAWEGGKRDADFTRLDKDAFASSPSDSIDYAVMEKTADAVVVPLDAGWNDVGSWSSLLDVSEQDGQGNAHHGDVIQLDCKNTYAYGSRLIAMVGLENVVVVETDDAVLVGHRDRIQEVKEVVSQIKSAGRSEATWHRKVYRPWGAYDSIDMGQRFQVKRITVKPGATLSLQMHHHRAEHWIVVSGTAEVTRGEEVLLLTENQSTYIPLGVTHRLKNPGKLPLELIEVQSGSYLGEDDIVRFEDTYGRT.

Belongs to the mannose-6-phosphate isomerase type 2 family.

The enzyme catalyses D-mannose 6-phosphate = D-fructose 6-phosphate. It catalyses the reaction alpha-D-mannose 1-phosphate + GTP + H(+) = GDP-alpha-D-mannose + diphosphate. It participates in nucleotide-sugar biosynthesis; GDP-alpha-D-mannose biosynthesis; GDP-alpha-D-mannose from alpha-D-mannose 1-phosphate (GTP route): step 1/1. It functions in the pathway nucleotide-sugar biosynthesis; GDP-alpha-D-mannose biosynthesis; alpha-D-mannose 1-phosphate from D-fructose 6-phosphate: step 1/2. Its function is as follows. Involved in xanthan production. The protein is Xanthan biosynthesis protein XanB (xanB) of Xanthomonas campestris pv. campestris (strain ATCC 33913 / DSM 3586 / NCPPB 528 / LMG 568 / P 25).